The sequence spans 203 residues: MGSQWGKDKVYRRAMNEGFRSRAAYKLQEIQERFSIIREDDNIVDLGAAPGSWLQVERTLTKGKVLGVDLNPIPSIDGVMTVVGDLTTSEVQQQVKDLVGVVNVVLCDASPKLSGHKCYDQARAIGLGEDALMFAARTMKQGGNMAMKSFQGEMFHELLEEVKKHFYVVKTFHTKSTRRGSTEIYIVAKNFIGSSGDVEGHIQ.

S-adenosyl-L-methionine-binding residues include glycine 51, tryptophan 53, aspartate 69, aspartate 85, and aspartate 108. Residue lysine 148 is the Proton acceptor of the active site.

It belongs to the class I-like SAM-binding methyltransferase superfamily. RNA methyltransferase RlmE family.

Its subcellular location is the cytoplasm. It catalyses the reaction uridine(2552) in 23S rRNA + S-adenosyl-L-methionine = 2'-O-methyluridine(2552) in 23S rRNA + S-adenosyl-L-homocysteine + H(+). Its function is as follows. Specifically methylates the uridine in position 2552 of 23S rRNA at the 2'-O position of the ribose in the fully assembled 50S ribosomal subunit. The protein is Ribosomal RNA large subunit methyltransferase E of Methanosphaerula palustris (strain ATCC BAA-1556 / DSM 19958 / E1-9c).